The following is a 288-amino-acid chain: Nucleotide-binding protein ASA_0318 (288 aa).

8-15 (GRSGSGKT) serves as a coordination point for ATP. 56–59 (DVRN) contributes to the GTP binding site.

It belongs to the RapZ-like family.

Functionally, displays ATPase and GTPase activities. This is Nucleotide-binding protein ASA_0318 from Aeromonas salmonicida (strain A449).